We begin with the raw amino-acid sequence, 168 residues long: Dihydrofolate reductase (168 aa).

The DHFR domain maps to 1–164 (MIIGIWAEDE…YTFTIKKYEK (164 aa)). Residue 5–7 (IWA) coordinates substrate. Residues 6–7 (WA) and 14–19 (IGEADK) contribute to the NADP(+) site. E27 is a substrate binding site. 43–46 (GRKT) provides a ligand contact to NADP(+). R58 contacts substrate. NADP(+)-binding positions include 63-66 (LTRD) and 99-104 (TGGAEI). T118 is a substrate binding site.

Belongs to the dihydrofolate reductase family.

The enzyme catalyses (6S)-5,6,7,8-tetrahydrofolate + NADP(+) = 7,8-dihydrofolate + NADPH + H(+). The protein operates within cofactor biosynthesis; tetrahydrofolate biosynthesis; 5,6,7,8-tetrahydrofolate from 7,8-dihydrofolate: step 1/1. Functionally, key enzyme in folate metabolism. Catalyzes an essential reaction for de novo glycine and purine synthesis, and for DNA precursor synthesis. This is Dihydrofolate reductase (folA) from Lactococcus lactis subsp. lactis (strain IL1403) (Streptococcus lactis).